The sequence spans 1405 residues: DNA-directed RNA polymerase subunit beta' (1405 aa).

Residues C70, C72, C85, and C88 each contribute to the Zn(2+) site. Mg(2+) contacts are provided by D460, D462, and D464. Zn(2+) is bound by residues C814, C888, C895, and C898.

This sequence belongs to the RNA polymerase beta' chain family. In terms of assembly, the RNAP catalytic core consists of 2 alpha, 1 beta, 1 beta' and 1 omega subunit. When a sigma factor is associated with the core the holoenzyme is formed, which can initiate transcription. The cofactor is Mg(2+). Zn(2+) serves as cofactor.

It carries out the reaction RNA(n) + a ribonucleoside 5'-triphosphate = RNA(n+1) + diphosphate. DNA-dependent RNA polymerase catalyzes the transcription of DNA into RNA using the four ribonucleoside triphosphates as substrates. This Shewanella sp. (strain ANA-3) protein is DNA-directed RNA polymerase subunit beta'.